The sequence spans 1034 residues: Isoleucine--tRNA ligase (1034 aa).

A 'HIGH' region motif is present at residues 48–58 (PTANGKPHIGH). A 'KMSKS' region motif is present at residues 588-592 (KMSKH). Residue Lys-591 participates in ATP binding.

It belongs to the class-I aminoacyl-tRNA synthetase family. IleS type 2 subfamily. Monomer. The cofactor is Zn(2+).

Its subcellular location is the cytoplasm. The catalysed reaction is tRNA(Ile) + L-isoleucine + ATP = L-isoleucyl-tRNA(Ile) + AMP + diphosphate. Functionally, catalyzes the attachment of isoleucine to tRNA(Ile). As IleRS can inadvertently accommodate and process structurally similar amino acids such as valine, to avoid such errors it has two additional distinct tRNA(Ile)-dependent editing activities. One activity is designated as 'pretransfer' editing and involves the hydrolysis of activated Val-AMP. The other activity is designated 'posttransfer' editing and involves deacylation of mischarged Val-tRNA(Ile). The sequence is that of Isoleucine--tRNA ligase from Clostridium kluyveri (strain ATCC 8527 / DSM 555 / NBRC 12016 / NCIMB 10680 / K1).